We begin with the raw amino-acid sequence, 155 residues long: UPF0266 membrane protein LMHCC_1856 (155 aa).

A run of 3 helical transmembrane segments spans residues 8–28 (IFLF…DAVI), 46–66 (RWDG…NTFF), and 70–90 (PFST…ICFF).

This sequence belongs to the UPF0266 family.

The protein localises to the cell membrane. This Listeria monocytogenes serotype 4a (strain HCC23) protein is UPF0266 membrane protein LMHCC_1856.